The sequence spans 94 residues: Co-chaperonin GroES (94 aa).

This sequence belongs to the GroES chaperonin family. Heptamer of 7 subunits arranged in a ring. Interacts with the chaperonin GroEL.

The protein localises to the cytoplasm. In terms of biological role, together with the chaperonin GroEL, plays an essential role in assisting protein folding. The GroEL-GroES system forms a nano-cage that allows encapsulation of the non-native substrate proteins and provides a physical environment optimized to promote and accelerate protein folding. GroES binds to the apical surface of the GroEL ring, thereby capping the opening of the GroEL channel. This chain is Co-chaperonin GroES, found in Parageobacillus thermoglucosidasius (Geobacillus thermoglucosidasius).